A 287-amino-acid polypeptide reads, in one-letter code: Glutamate racemase (287 aa).

Residues 32 to 33 and 64 to 65 contribute to the substrate site; these read DS and YG. C96 serves as the catalytic Proton donor/acceptor. 97–98 lines the substrate pocket; that stretch reads NT. C208 functions as the Proton donor/acceptor in the catalytic mechanism. 209 to 210 serves as a coordination point for substrate; it reads TH.

The protein belongs to the aspartate/glutamate racemases family.

The catalysed reaction is L-glutamate = D-glutamate. Its pathway is cell wall biogenesis; peptidoglycan biosynthesis. Its function is as follows. Provides the (R)-glutamate required for cell wall biosynthesis. In Photorhabdus laumondii subsp. laumondii (strain DSM 15139 / CIP 105565 / TT01) (Photorhabdus luminescens subsp. laumondii), this protein is Glutamate racemase.